Consider the following 122-residue polypeptide: Ribosome-binding factor A (122 aa).

This sequence belongs to the RbfA family. In terms of assembly, monomer. Binds 30S ribosomal subunits, but not 50S ribosomal subunits or 70S ribosomes.

It is found in the cytoplasm. Functionally, one of several proteins that assist in the late maturation steps of the functional core of the 30S ribosomal subunit. Associates with free 30S ribosomal subunits (but not with 30S subunits that are part of 70S ribosomes or polysomes). Required for efficient processing of 16S rRNA. May interact with the 5'-terminal helix region of 16S rRNA. This chain is Ribosome-binding factor A, found in Burkholderia mallei (strain NCTC 10229).